We begin with the raw amino-acid sequence, 288 residues long: Diaminopimelate epimerase (288 aa).

Substrate is bound by residues Asn-14 and Asn-67. Catalysis depends on Cys-76, which acts as the Proton donor. Substrate is bound by residues 77–78 (GN), Asn-166, Asn-199, and 217–218 (ER). Cys-226 serves as the catalytic Proton acceptor. Position 227-228 (227-228 (GT)) interacts with substrate.

It belongs to the diaminopimelate epimerase family. In terms of assembly, homodimer.

It localises to the cytoplasm. The enzyme catalyses (2S,6S)-2,6-diaminopimelate = meso-2,6-diaminopimelate. Its pathway is amino-acid biosynthesis; L-lysine biosynthesis via DAP pathway; DL-2,6-diaminopimelate from LL-2,6-diaminopimelate: step 1/1. In terms of biological role, catalyzes the stereoinversion of LL-2,6-diaminopimelate (L,L-DAP) to meso-diaminopimelate (meso-DAP), a precursor of L-lysine and an essential component of the bacterial peptidoglycan. In Bacillus thuringiensis (strain Al Hakam), this protein is Diaminopimelate epimerase.